We begin with the raw amino-acid sequence, 87 residues long: Small ribosomal subunit protein uS15c (87 aa).

Belongs to the universal ribosomal protein uS15 family. Part of the 30S ribosomal subunit.

It localises to the plastid. The protein localises to the chloroplast. The polypeptide is Small ribosomal subunit protein uS15c (rps15) (Solanum tuberosum (Potato)).